Reading from the N-terminus, the 97-residue chain is UPF0235 protein cbdbA1230 (97 aa).

The protein belongs to the UPF0235 family.

The sequence is that of UPF0235 protein cbdbA1230 from Dehalococcoides mccartyi (strain CBDB1).